The chain runs to 150 residues: Catabolic 3-dehydroquinase 2 (150 aa).

Residue Tyr23 is the Proton acceptor of the active site. The substrate site is built by Asn74, His80, and Asp87. Residue His100 is the Proton donor of the active site. Substrate-binding positions include 101-102 (IT) and Arg111.

Belongs to the type-II 3-dehydroquinase family. Homododecamer. Adopts a ring-like structure, composed of an arrangement of two hexameric rings stacked on top of one another.

It catalyses the reaction 3-dehydroquinate = 3-dehydroshikimate + H2O. It participates in aromatic compound metabolism; 3,4-dihydroxybenzoate biosynthesis; 3,4-dihydroxybenzoate from 3-dehydroquinate: step 1/2. Functionally, is involved in the catabolism of quinate. Allows the utilization of quinate as carbon source via the beta-ketoadipate pathway. In Neosartorya fischeri (strain ATCC 1020 / DSM 3700 / CBS 544.65 / FGSC A1164 / JCM 1740 / NRRL 181 / WB 181) (Aspergillus fischerianus), this protein is Catabolic 3-dehydroquinase 2.